The sequence spans 54 residues: ATP synthase protein 8 (54 aa).

A helical transmembrane segment spans residues 8–28; that stretch reads WWLLNFFLGWTSLLVIFIILL.

Belongs to the ATPase protein 8 family. F-type ATPases have 2 components, CF(1) - the catalytic core - and CF(0) - the membrane proton channel.

The protein localises to the mitochondrion membrane. In terms of biological role, mitochondrial membrane ATP synthase (F(1)F(0) ATP synthase or Complex V) produces ATP from ADP in the presence of a proton gradient across the membrane which is generated by electron transport complexes of the respiratory chain. F-type ATPases consist of two structural domains, F(1) - containing the extramembraneous catalytic core and F(0) - containing the membrane proton channel, linked together by a central stalk and a peripheral stalk. During catalysis, ATP synthesis in the catalytic domain of F(1) is coupled via a rotary mechanism of the central stalk subunits to proton translocation. Part of the complex F(0) domain. Minor subunit located with subunit a in the membrane. This chain is ATP synthase protein 8 (MT-ATP8), found in Patiria pectinifera (Starfish).